Reading from the N-terminus, the 311-residue chain is 33 kDa chaperonin (311 aa).

2 cysteine pairs are disulfide-bonded: Cys240–Cys242 and Cys273–Cys276.

The protein belongs to the HSP33 family. Post-translationally, under oxidizing conditions two disulfide bonds are formed involving the reactive cysteines. Under reducing conditions zinc is bound to the reactive cysteines and the protein is inactive.

It is found in the cytoplasm. Its function is as follows. Redox regulated molecular chaperone. Protects both thermally unfolding and oxidatively damaged proteins from irreversible aggregation. Plays an important role in the bacterial defense system toward oxidative stress. This chain is 33 kDa chaperonin, found in Trichodesmium erythraeum (strain IMS101).